The chain runs to 260 residues: Flavin-dependent thymidylate synthase (260 aa).

Positions 2–203 constitute a ThyX domain; the sequence is ISVKLVSYTN…PRLFKYTGPN (202 aa). Residues Ser56, 80–82, and Gln88 contribute to the FAD site; that span reads RHR. DUMP-binding positions include 77–80, 88–92, and Arg142; these read QLVR and QMSHR. The short motif at 80–90 is the ThyX motif element; the sequence is RHRIASYTQMS. Residues 158-160 and Asn164 contribute to the FAD site; that span reads NAR. Residue Arg169 participates in dUMP binding. Residue Arg169 is the Involved in ionization of N3 of dUMP, leading to its activation of the active site.

Belongs to the thymidylate synthase ThyX family. In terms of assembly, homotetramer. FAD is required as a cofactor.

It catalyses the reaction dUMP + (6R)-5,10-methylene-5,6,7,8-tetrahydrofolate + NADPH + H(+) = dTMP + (6S)-5,6,7,8-tetrahydrofolate + NADP(+). It participates in pyrimidine metabolism; dTTP biosynthesis. Catalyzes the reductive methylation of 2'-deoxyuridine-5'-monophosphate (dUMP) to 2'-deoxythymidine-5'-monophosphate (dTMP) while utilizing 5,10-methylenetetrahydrofolate (mTHF) as the methyl donor, and NADPH and FADH(2) as the reductant. In Saccharolobus solfataricus (strain ATCC 35092 / DSM 1617 / JCM 11322 / P2) (Sulfolobus solfataricus), this protein is Flavin-dependent thymidylate synthase.